Here is a 284-residue protein sequence, read N- to C-terminus: uncharacterized protein (284 aa).

Asn-79, Asn-102, Asn-111, Asn-147, Asn-162, Asn-174, Asn-196, Asn-211, Asn-228, and Asn-234 each carry an N-linked (GlcNAc...) asparagine; by host glycan. A helical membrane pass occupies residues 239–259 (AFTYGSWGVAMLLFAAVMVLV).

This sequence belongs to the RL11 family.

It localises to the membrane. This is an uncharacterized protein from Human cytomegalovirus (strain AD169) (HHV-5).